A 478-amino-acid chain; its full sequence is Cytochrome c biogenesis protein CcsB (478 aa).

A run of 3 helical transmembrane segments spans residues 30 to 50, 89 to 109, and 175 to 195; these read LRLA…GTVI, TSWF…CSLT, and FGPI…IWGS. Residues 453 to 478 are disordered; that stretch reads LSSPPSPAKEPPPAARVGGTESLANG. Residues 456-466 show a composition bias toward pro residues; the sequence is PPSPAKEPPPA.

Belongs to the Ccs1/CcsB family. As to quaternary structure, may interact with CcsA.

The protein resides in the cellular thylakoid membrane. Required during biogenesis of c-type cytochromes (cytochrome c6 and cytochrome f) at the step of heme attachment. The protein is Cytochrome c biogenesis protein CcsB of Synechococcus sp. (strain JA-3-3Ab) (Cyanobacteria bacterium Yellowstone A-Prime).